The following is a 118-amino-acid chain: Large ribosomal subunit protein uL18 (118 aa).

It belongs to the universal ribosomal protein uL18 family. As to quaternary structure, part of the 50S ribosomal subunit; part of the 5S rRNA/L5/L18/L25 subcomplex. Contacts the 5S and 23S rRNAs.

In terms of biological role, this is one of the proteins that bind and probably mediate the attachment of the 5S RNA into the large ribosomal subunit, where it forms part of the central protuberance. The chain is Large ribosomal subunit protein uL18 from Campylobacter jejuni subsp. doylei (strain ATCC BAA-1458 / RM4099 / 269.97).